The following is a 563-amino-acid chain: Arginine--tRNA ligase (563 aa).

Positions 121-131 (PNIAKPFSIGH) match the 'HIGH' region motif.

It belongs to the class-I aminoacyl-tRNA synthetase family. In terms of assembly, monomer.

It localises to the cytoplasm. It catalyses the reaction tRNA(Arg) + L-arginine + ATP = L-arginyl-tRNA(Arg) + AMP + diphosphate. The sequence is that of Arginine--tRNA ligase from Streptococcus pneumoniae serotype 19F (strain G54).